We begin with the raw amino-acid sequence, 375 residues long: Stimulator of interferon genes protein 2 (375 aa).

Transmembrane regions (helical) follow at residues T30 to V50, I60 to V80, A114 to E134, and Y144 to L164. Positions 195, 256, and 262 each coordinate 2',3'-cGAMP.

The protein belongs to the STING family.

The protein resides in the membrane. Facilitator of innate immune signaling that acts as a sensor of second messenger signals produced by cyclic GMP-AMP synthase-like receptors (cGLRs) and promotes the production of type I interferon. Innate immune response is triggered in response to nucleotides from viruses and bacteria delivered to the cytoplasm. Acts by binding cyclic dinucleotides: recognizes and binds 2'-3' linked cGAMP (2'-3'-cGAMP), a second messengers produced by cGLRs in response to nucleotides in the cytosol, such as double-stranded RNA (dsRNA). Upon binding to 2'-3'-cGAMP, oligomerizes and promotes the recruitment and subsequent activation of the transcription factor IRF3 to induce expression of type I interferon. This chain is Stimulator of interferon genes protein 2, found in Stylophora pistillata (Smooth cauliflower coral).